We begin with the raw amino-acid sequence, 254 residues long: MMIKYITIAILFIASLVKADLQFSLCPTCVDFINNDMGDLEKIISGGIATSCGAVCSLLPNNIEQGACNLLCDIVGIDEFLKVFNNIGEDADPVWICEELTVCPKNQNSNATVLTSDVSPASGPHGTTFTIGVAYKVESTLGTGEVAVMVTDPTGSNGFGDAQLIVNTQPGQYSTSFSFAATPSEDEQFPAGVYQVQLMICEGSCGAKHSVTFNSVYANFTVTSGPSVTGQMTGTGSGSGSGSGSSSGAAYLRY.

An N-terminal signal peptide occupies residues 1–19; sequence MMIKYITIAILFIASLVKA. The Saposin B-type domain maps to 22 to 107; it reads QFSLCPTCVD…EELTVCPKNQ (86 aa). Disulfide bonds link Cys26/Cys103, Cys29/Cys97, and Cys56/Cys68. 2 N-linked (GlcNAc...) asparagine glycosylation sites follow: Asn110 and Asn219. Residues 231–254 are disordered; that stretch reads QMTGTGSGSGSGSGSSSGAAYLRY. A compositionally biased stretch (gly residues) spans 233–245; sequence TGTGSGSGSGSGS.

The protein belongs to the countin family.

The protein localises to the secreted. Cell-counting factor that limits the minimum size of the multicellular structure. May up-regulate the expression of both gp24 and gp80, which mediate cell adhesion. The sequence is that of Countin-2 (ctnB) from Dictyostelium discoideum (Social amoeba).